Here is a 97-residue protein sequence, read N- to C-terminus: HssA/B-like protein 38 (97 aa).

The interval 1 to 29 (MTLFSSISSISNPMTSSKSSISSFGSGTS) is disordered.

The protein belongs to the hssA/B family.

This chain is HssA/B-like protein 38 (hssl38), found in Dictyostelium discoideum (Social amoeba).